Here is an 88-residue protein sequence, read N- to C-terminus: Small ribosomal subunit protein bS20 (88 aa).

The tract at residues 1–20 is disordered; sequence MPNIKSAIKRTKTNNERRAH.

The protein belongs to the bacterial ribosomal protein bS20 family.

In terms of biological role, binds directly to 16S ribosomal RNA. The sequence is that of Small ribosomal subunit protein bS20 from Bacillus velezensis (strain DSM 23117 / BGSC 10A6 / LMG 26770 / FZB42) (Bacillus amyloliquefaciens subsp. plantarum).